Reading from the N-terminus, the 364-residue chain is MLLIDIKKQLGDLLLDVKLSLPSSGISAIFGRSGAGKSSLANVISGLTSPEEGRITLNNRVLFDSESKVSMPPEKRNIGYVFQDARLFPHYKVEGNLLYGCGGKRTPHFNDVVKLLDIESLLTRYPHSLSGGEKQRVAIGRAILSEPALLIMDEPLASLDLPRKHEVMPYLERLAKEIKIPILYVSHSLDEILRLADNMVLLNQGSVSLSGDITSVWGSPLMRPWLNASEHSALLEGTISELHSDHPMTKVTLNNSQQGIWVKSPCDCVEEGKKIRLRIRANDVSLIKQQPQHSSIRNILPVVIEDLSEDKENDVVAVKLNLSGHVLWANITLWARDELQLGIGQSWFAQIKGVSVTQSDLCSK.

The ABC transporter domain maps to 1–229 (MLLIDIKKQL…PLMRPWLNAS (229 aa)). An ATP-binding site is contributed by 31 to 38 (GRSGAGKS). Residues 293–360 (HSSIRNILPV…IKGVSVTQSD (68 aa)) form the Mop domain.

Belongs to the ABC transporter superfamily. Molybdate importer (TC 3.A.1.8) family. The complex is composed of two ATP-binding proteins (ModC), two transmembrane proteins (ModB) and a solute-binding protein (ModA).

The protein resides in the cell inner membrane. The enzyme catalyses molybdate(out) + ATP + H2O = molybdate(in) + ADP + phosphate + H(+). Functionally, part of the ABC transporter complex ModABC involved in molybdenum import. Responsible for energy coupling to the transport system. This chain is Molybdenum import ATP-binding protein ModC, found in Aliivibrio fischeri (strain ATCC 700601 / ES114) (Vibrio fischeri).